A 173-amino-acid polypeptide reads, in one-letter code: UPF0316 protein Bsph_0745 (173 aa).

Helical transmembrane passes span 4–24, 31–51, and 58–78; these read IVLILILQLVYVPFLTLRTIF, FLAAIFGMLEMLVYVFGLSLV, and MLAMVVYAVGFGLGIFLGAKI.

This sequence belongs to the UPF0316 family.

Its subcellular location is the cell membrane. The protein is UPF0316 protein Bsph_0745 of Lysinibacillus sphaericus (strain C3-41).